The primary structure comprises 299 residues: Inosose dehydratase (299 aa).

This sequence belongs to the IolE/MocC family. It depends on glutathione as a cofactor. Co(2+) serves as cofactor. Mn(2+) is required as a cofactor.

It carries out the reaction scyllo-inosose = 3D-3,5/4-trihydroxycyclohexane-1,2-dione + H2O. In terms of biological role, catalyzes the dehydration of inosose (2-keto-myo-inositol, 2KMI or 2,4,6/3,5-pentahydroxycyclohexanone) to 3D-(3,5/4)-trihydroxycyclohexane-1,2-dione (D-2,3-diketo-4-deoxy-epi-inositol). This is Inosose dehydratase from Klebsiella pneumoniae (strain 342).